We begin with the raw amino-acid sequence, 493 residues long: NAD(P)H dehydrogenase (quinone) (493 aa).

FAD contacts are provided by residues 12–13, 35–37, 42–43, K52, G117, D317, 324–325, and Y450; these read PA, DCD, AA, and LA.

Belongs to the class-I pyridine nucleotide-disulfide oxidoreductase family. Homotetramer. It depends on FAD as a cofactor.

It catalyses the reaction a quinone + NADH + H(+) = a quinol + NAD(+). The enzyme catalyses a quinone + NADPH + H(+) = a quinol + NADP(+). Functionally, may contribute to virulence by increasing resistance to reactive oxygen intermediates. It can reduce 2,6-dimethyl-1,4-benzoquinone (DMBQ), 5-hydroxy-1,4-naphthaquinone (5-HNQ) and menadione. This chain is NAD(P)H dehydrogenase (quinone) (lpdA), found in Mycobacterium tuberculosis (strain CDC 1551 / Oshkosh).